A 556-amino-acid chain; its full sequence is Oxygen-dependent choline dehydrogenase (556 aa).

4–33 (DYIIIGAGSAGNVLATRLTEDPNTSVLLLE) contributes to the FAD binding site. H473 (proton acceptor) is an active-site residue.

It belongs to the GMC oxidoreductase family. Requires FAD as cofactor.

The enzyme catalyses choline + A = betaine aldehyde + AH2. It catalyses the reaction betaine aldehyde + NAD(+) + H2O = glycine betaine + NADH + 2 H(+). It functions in the pathway amine and polyamine biosynthesis; betaine biosynthesis via choline pathway; betaine aldehyde from choline (cytochrome c reductase route): step 1/1. Involved in the biosynthesis of the osmoprotectant glycine betaine. Catalyzes the oxidation of choline to betaine aldehyde and betaine aldehyde to glycine betaine at the same rate. The protein is Oxygen-dependent choline dehydrogenase of Escherichia coli (strain K12 / DH10B).